The chain runs to 464 residues: UNC93-like protein 3 (464 aa).

The next 11 helical transmembrane spans lie at 31-51 (VHILSISFLLIFLAYGAAQNL), 62-82 (ISLGILYVSFMFCSMVASLVV), 84-104 (LMGSKNALVLGTTGYWLFVAA), 110-130 (WFTMVPASLYLGFAASIIWVG), 160-180 (EFWAMFACHQLFGNLITLALL), 192-212 (TLLMLVFLFSMTLGTILMFFI), 251-271 (LLIVPLLAYSGLQQAFVWAEF), 275-295 (IVTPAIGVSGVGGAMAVYGAL), 313-333 (ITFIVSGGAVAQASVFLWLLL), 341-361 (VLGTAYPLIMAAILGIGDGIL), and 392-412 (IAIVFFLSPYISLQAMLIVML).

This sequence belongs to the unc-93 family.

The protein localises to the membrane. This is UNC93-like protein 3 from Arabidopsis thaliana (Mouse-ear cress).